Consider the following 87-residue polypeptide: Kappa-5-bungarotoxin (87 aa).

The first 21 residues, 1 to 21 (MKTLLLTLVVVTIVCLDLGYT), serve as a signal peptide directing secretion. Intrachain disulfides connect C24–C42, C35–C63, C48–C52, C67–C79, and C80–C85.

It belongs to the three-finger toxin family. Long-chain subfamily. Kappa-neurotoxin sub-subfamily. As to quaternary structure, homo- and heterodimer; non-covalently linked. As to expression, expressed by the venom gland.

Its subcellular location is the secreted. In terms of biological role, postsynaptic neurotoxin that binds and inhibits neuronal nicotinic acetylcholine receptors (nAChR) with high affinity (IC(50)&lt;100 nM). Is a selective, and slowly reversible antagonist of alpha-3/CHRNA3-containing and some alpha-4/CHRNA4-containing AChRs. The polypeptide is Kappa-5-bungarotoxin (Bungarus multicinctus (Many-banded krait)).